Consider the following 92-residue polypeptide: Large ribosomal subunit protein eL43 (92 aa).

The Zn(2+) site is built by cysteine 39, cysteine 42, cysteine 57, and cysteine 60. The C4-type zinc-finger motif lies at cysteine 39–cysteine 60.

This sequence belongs to the eukaryotic ribosomal protein eL43 family. Component of the large ribosomal subunit.

The protein localises to the cytoplasm. Component of the large ribosomal subunit. The ribosome is a large ribonucleoprotein complex responsible for the synthesis of proteins in the cell. The protein is Large ribosomal subunit protein eL43 (rpl37a) of Ictalurus punctatus (Channel catfish).